The primary structure comprises 278 residues: Cyclin-C (278 aa).

The Cyclin N-terminal domain maps to asparagine 41–glutamate 139. The tract at residues threonine 247–serine 278 is disordered. Residues proline 267–serine 278 are compositionally biased toward polar residues. A Phosphoserine modification is found at serine 270.

It belongs to the cyclin family. Cyclin C subfamily. Component of the Mediator complex, which is composed of MED1, MED4, MED6, MED7, MED8, MED9, MED10, MED11, MED12, MED13, MED13L, MED14, MED15, MED16, MED17, MED18, MED19, MED20, MED21, MED22, MED23, MED24, MED25, MED26, MED27, MED29, MED30, MED31, CCNC, CDK8 and CDC2L6/CDK11. The MED12, MED13, CCNC and CDK8 subunits form a distinct module termed the CDK8 module. Mediator containing the CDK8 module is less active than Mediator lacking this module in supporting transcriptional activation. Individual preparations of the Mediator complex lacking one or more distinct subunits have been variously termed ARC, CRSP, DRIP, PC2, SMCC and TRAP. The cylin/CDK pair formed by CCNC/CDK8 also associates with the large subunit of RNA polymerase II.

It localises to the nucleus. In terms of biological role, component of the Mediator complex, a coactivator involved in regulated gene transcription of nearly all RNA polymerase II-dependent genes. Mediator functions as a bridge to convey information from gene-specific regulatory proteins to the basal RNA polymerase II transcription machinery. Mediator is recruited to promoters by direct interactions with regulatory proteins and serves as a scaffold for the assembly of a functional preinitiation complex with RNA polymerase II and the general transcription factors. Binds to and activates cyclin-dependent kinase CDK8 that phosphorylates the CTD (C-terminal domain) of the large subunit of RNA polymerase II (RNAp II), which may inhibit the formation of a transcription initiation complex. This chain is Cyclin-C (Ccnc), found in Rattus norvegicus (Rat).